Here is a 561-residue protein sequence, read N- to C-terminus: Putative transport protein Ent638_1362 (561 aa).

5 helical membrane passes run 8–28, 32–52, 66–86, 94–114, and 158–178; these read LLNG…LCLG, LGSV…LLGQ, FMLF…SIFF, MLAL…GKLF, and HLSL…IVAA. 2 consecutive RCK C-terminal domains span residues 202–288 and 292–373; these read LDTD…SFRN and VFDR…RIGF. Helical transmembrane passes span 383–403, 406–426, 447–467, 475–495, and 540–560; these read LLAF…TFQF, FSFG…LGFL, FGLM…IGHS, MLVA…LFGA, and AIAN…WPGL.

This sequence belongs to the AAE transporter (TC 2.A.81) family. YbjL subfamily.

It is found in the cell membrane. The protein is Putative transport protein Ent638_1362 of Enterobacter sp. (strain 638).